The primary structure comprises 430 residues: MSWVQATLLARGLCRAWGGICRAALPGTSISQVPRQLPRGLHCSAAPHSSEQSLVSSPPEPRQRPTKALVPYEDLFGQAPSGERDKASFLQAVQKFGEHSVRKRGHIDFIYLALRKMREYGVERDLAVYNQLLDIFPKEVFRPRNVIQRIFVHYPRQQECGIAVLEQMESHGVMPNKETEFLLIQIFGRKSYPMLKLLRLKMWFPRFMNINPFPVPRDLSQDPVELATFGLRHMEPDLSARVTIYQVPLPKDSTGAADPPQPHIVGIQSPDQQAALARHNPARPIFVEGPFSLWLRNKCVYYHILRADLLPPEEREVEETPEEWNLYYPMQLDLEYSRSGWDDYEFDINEVEEGPVFAMCMAGAHDQATLAKWIQGLQETNPTLAQIPVVFRLTRATGELHTSSAGLEEPPPPEDHEEDDSRQRQQQGQS.

The N-terminal 48 residues, 1–48 (MSWVQATLLARGLCRAWGGICRAALPGTSISQVPRQLPRGLHCSAAPH), are a transit peptide targeting the mitochondrion. Positions 41–66 (LHCSAAPHSSEQSLVSSPPEPRQRPT) are disordered. Positions 47–56 (PHSSEQSLVS) are enriched in polar residues. A Glycyl lysine isopeptide (Lys-Gly) (interchain with G-Cter in ubiquitin) cross-link involves residue Lys372. The disordered stretch occupies residues 400–430 (LHTSSAGLEEPPPPEDHEEDDSRQRQQQGQS). The span at 411–420 (PPPEDHEEDD) shows a compositional bias: acidic residues.

The protein belongs to the ECSIT family. Interacts with MAP3K1, SMAD4 and TRAF6. Interacts with SMAD1 only after BMP4-treatment. Part of the mitochondrial complex I assembly/MCIA complex that comprises at least the core subunits TMEM126B, NDUFAF1, ECSIT and ACAD9 and complement subunits such as COA1 and TMEM186. Interacts with NDUFAF1. Interacts with ACAD9. Interacts with TRIM59. Interacts with TMEM70 and TMEM242. Interacts (when ubiquitinated) with NF-kappa-B subunits RELA and NFKB1. Interacts with RIGI, IFIT1 and MAVS; these interactions promote RLR-mediated type I IFN induction. Interacts with SQSTM1; this interaction inhibits TLR4 signaling via functional regulation of the TRAF6-ECSIT complex. Interacts with cereblon/CRBN; this interaction inhibits the ubiquitination of ECSIT. Ubiquitinated on Lys-372; leading to translocation in the nucleus together with RELA and NFKB1 and expression of NF-kappa-B-dependent genes.

The protein resides in the cytoplasm. It is found in the nucleus. Its subcellular location is the mitochondrion. Its function is as follows. Adapter protein that plays a role in different signaling pathways including TLRs and IL-1 pathways or innate antiviral induction signaling. Plays a role in the activation of NF-kappa-B by forming a signal complex with TRAF6 and TAK1/MAP3K7 to activate TAK1/MAP3K7 leading to activation of IKKs. Once ubiquitinated, interacts with the dissociated RELA and NFKB1 proteins and translocates to the nucleus where it induces NF-kappa-B-dependent gene expression. Plays a role in innate antiviral immune response by bridging the pattern recognition receptors RIGI and MDA5/IFIT1 to the MAVS complex at the mitochondrion. Promotes proteolytic activation of MAP3K1. Involved in the BMP signaling pathway. Required for normal embryonic development. In terms of biological role, as part of the MCIA complex, involved in the assembly of the mitochondrial complex I. This chain is Evolutionarily conserved signaling intermediate in Toll pathway, mitochondrial, found in Macaca fascicularis (Crab-eating macaque).